We begin with the raw amino-acid sequence, 1221 residues long: Coatomer subunit alpha (1221 aa).

WD repeat units lie at residues 7 to 46, 49 to 88, 91 to 130, 133 to 172, 202 to 241, 243 to 282, 285 to 323, 358 to 399, and 528 to 567; these read TKASRVKGLSFHPTRPWILASLHSGSIHLYDYRIKTLLEK, EHEGPVRGINFHMTQPLFVSGGDDYKIKVWNYKQRRCLFT, GHKDYIRSVEFHREAPWIVSSSDDMVIRIWNWQSRTCIAE, GHNHYVMSALFHPKDDLVVSASLDQTIRIWDISGLKKKMT, GHDRGVNWASFHPTQPYIVSASDDHQVKLWRMNDPIVDTF, GHYNNVSCALFHPRQDLIISNSEDKTIRVWDIIKKSTVHM, RDHDRFWTLASHPNQNLFAAGHDSGMIVFKLERERPLFV, PSNN…SNTV, and WDDNGVFIYSTSNHLKYLLQNGDNGTIRTLESTIYITGVK. Residues 820-885 are disordered; that stretch reads GVEQSTSTPT…DDGGWERDDL (66 aa). Low complexity predominate over residues 844-857; the sequence is SQQQSSQQQQQQQQ. The stretch at 910–953 is one WD 10 repeat; the sequence is PQPGPSFSMIWARNSQFAVDHIAAGSFESAMNILNSQIGAVNFD.

As to quaternary structure, oligomeric complex that consists of at least the alpha, beta, beta', gamma, delta, epsilon and zeta subunits.

Its subcellular location is the cytoplasm. It localises to the golgi apparatus membrane. The coatomer is a cytosolic protein complex that binds to dilysine motifs and reversibly associates with Golgi non-clathrin-coated vesicles, which further mediate biosynthetic protein transport from the ER, via the Golgi up to the trans Golgi network. Coatomer complex is required for budding from Golgi membranes, and is essential for the retrograde Golgi-to-ER transport of dilysine-tagged proteins. This chain is Coatomer subunit alpha (copa), found in Dictyostelium discoideum (Social amoeba).